A 159-amino-acid polypeptide reads, in one-letter code: RNA pyrophosphohydrolase (159 aa).

The 144-residue stretch at 6–149 (GFRPNVGIIL…KREVYRRALK (144 aa)) folds into the Nudix hydrolase domain. Positions 38–59 (GGINPDETPEDALYRELNEEVG) match the Nudix box motif.

The protein belongs to the Nudix hydrolase family. RppH subfamily. The cofactor is a divalent metal cation.

Its function is as follows. Accelerates the degradation of transcripts by removing pyrophosphate from the 5'-end of triphosphorylated RNA, leading to a more labile monophosphorylated state that can stimulate subsequent ribonuclease cleavage. In Pseudomonas fluorescens (strain SBW25), this protein is RNA pyrophosphohydrolase.